Consider the following 697-residue polypeptide: PHD finger protein At2g01810 (697 aa).

Disordered regions lie at residues 319–362 and 457–478; these read DENS…QYYS and EQKR…TSTT. The segment covering 339 to 349 has biased composition (basic and acidic residues); that stretch reads SGRDTVLDDHN. Residues 635-685 form a PHD-type zinc finger; that stretch reads TVDCKCGARDDDGERMVACDACKVWHHTLCNSIEDDEAVPSVFLCNMCYGD.

It is found in the nucleus. The chain is PHD finger protein At2g01810 from Arabidopsis thaliana (Mouse-ear cress).